The sequence spans 173 residues: Glycine cleavage system H protein, mitochondrial (173 aa).

The transit peptide at 1 to 48 directs the protein to the mitochondrion; the sequence is MALRAVRSVRAAVGGLRAISAPSAPCLPRPWGLRAGAVRELRTGPALL. One can recognise a Lipoyl-binding domain in the interval 66-148; sequence VGTVGISNFA…YEDGWLIKMT (83 aa). An N6-lipoyllysine modification is found at lysine 107.

It belongs to the GcvH family. Interacts with GLDC. The glycine cleavage system is composed of four proteins: P (GLDC), T (GCST), L (DLD) and H (GCSH). (R)-lipoate is required as a cofactor.

The protein resides in the mitochondrion. Functionally, the glycine cleavage system catalyzes the degradation of glycine. The H protein (GCSH) shuttles the methylamine group of glycine from the P protein (GLDC) to the T protein (GCST). Has a pivotal role in the lipoylation of enzymes involved in cellular energetics such as the mitochondrial dihydrolipoyllysine-residue acetyltransferase component of pyruvate dehydrogenase complex (DLAT), and the mitochondrial dihydrolipoyllysine-residue succinyltransferase component of 2-oxoglutarate dehydrogenase complex (DLST). This is Glycine cleavage system H protein, mitochondrial from Bos taurus (Bovine).